We begin with the raw amino-acid sequence, 196 residues long: Protein LSM12 homolog A (196 aa).

The region spanning 3-73 is the Sm domain; it reads APGPGEYFSV…VSEVDIINDR (71 aa). In terms of domain architecture, AD spans 81–175; the sequence is ASLNISKLAN…IVEKHFRDVE (95 aa). The disordered stretch occupies residues 174 to 196; it reads VESQKTMQRSQAQQTQKDSSLSS. Positions 177–196 are enriched in polar residues; it reads QKTMQRSQAQQTQKDSSLSS.

The protein belongs to the LSM12 family.

The sequence is that of Protein LSM12 homolog A (lsm12a) from Danio rerio (Zebrafish).